A 354-amino-acid chain; its full sequence is Tsukushi (354 aa).

A signal peptide spans 1 to 17 (MLCSLFLLLLAVGRVQT). The region spanning 18-59 (TRPCFPGCQCEEETFGLFDSFSLIRVDCSSLGPHIVPVPIPL) is the LRRNT domain. 10 LRR repeats span residues 60-81 (DTAH…VLAG), 86-107 (TLAG…AFSR), 110-131 (YLES…IFTS), 133-154 (PLSD…AFTT), 160-180 (ALHV…PARA), 186-207 (TIQS…RDLP), 208-228 (LRYL…AFMG), 231-253 (GLTH…GFRE), 256-277 (GLQV…EVFS), and 281-302 (LLQE…LLHH). The N-linked (GlcNAc...) asparagine glycan is linked to Asn75. An N-linked (GlcNAc...) asparagine glycan is attached at Asn138. Residue Asn191 is glycosylated (N-linked (GlcNAc...) asparagine).

In terms of assembly, interacts with FZD4 (via FZ domain); competes with WNT2B for binding to FZD4, inhibiting Wnt signaling and repressing peripheral eye development. Interacts with TGFB1; the interaction contributes to regulation of the hair cycle. Interacts with netrin. Interacts with CCN2. As to expression, expressed in macrophages in inflamed wounds with wound expression starting 2 days post-wounding (dpw) (at protein level). At 7 dpw, expressed from epidermis and extracellular matrix in the wound edge to neoepidermis and granulation tissue and in panniculus carnosus under the granulation tissue (at protein level). After fibrosis, disappears in the dermal area at 11 dpw (at protein level). Expressed in the hair follicle during morphogenesis and the hair cycle (at protein level). In embryonic brain, strong expression in the olfactory bulb, anterior olfactory nucleus, neocortex, piriform cortex, glial wedge, midline zipper glia, indusium griseum and the area surrounding the anterior commissure (AC) but not on AC axons (at protein level). In the adult eye, expressed in retinal layers, lens epithelium, and ciliary body where it is expressed predominantly in the inner non-pigmented layer. Expressed in almost all brain regions in the embryo, in the cortex and the lateral ventricle at P0 and is restricted to the subventricular zone and lateral nucleus of the amygdala in adults. Prominent expression in hippocampal regions from early postnatal stages until postnatal day 15 and gradually declines at later stages. Expressed in almost all bone regions in the femurs of juveniles. In the inner ear, accumulates in nonprosensory regions during early embryonic stages and in both nonprosensory and prosensory regions in late embryonic stages. In the adult ear, expressed in the organ of Corti, spiral ganglion cells, and the stria vascularis. Highly expressed in the liver where it is detected primarily in hepatocytes but not in non-parenchymal cells.

The protein localises to the secreted. In terms of biological role, contributes to various developmental events and other processes such as wound healing and cholesterol homeostasis through its interactions with multiple signaling pathways. Wnt signaling inhibitor which competes with WNT2B for binding to Wnt receptor FZD4 and represses WNT2B-dependent development of the peripheral eye. Plays a role in regulating the hair cycle by controlling TGFB1 signaling. Required for the development of the anterior commissure in the brain by inhibiting neurite outgrowth. Essential for terminal differentiation of hippocampal neural stem cells. Plays a role in regulating bone elongation and bone mass by modulating growth plate chondrocyte function and overall body size. Required for development of the inner ear through its involvement in stereocilia formation in inner hair cells. Facilitates wound healing by inhibiting secretion of TGFB1 from macrophages which prevents myofibroblast differentiation, maintaining inflammatory cell quiescence. Plays a role in cholesterol homeostasis by reducing circulating high-density lipoprotein cholesterol, lowering cholesterol efflux capacity and decreasing cholesterol-to-bile acid conversion in the liver. In one study, shown to negatively regulate sympathetic innervation in brown fat, leading to reduced energy expenditure. In another study, shown not to affect brown fat thermogenic capacity, body weight gain or glucose homeostasis. This chain is Tsukushi, found in Mus musculus (Mouse).